Consider the following 89-residue polypeptide: Class II hydrophobin 2 (89 aa).

The N-terminal stretch at 1-15 is a signal peptide; the sequence is MKLYIAAALLTLGLA. Cystine bridges form between Cys-34/Cys-74, Cys-45/Cys-66, Cys-46/Cys-58, and Cys-75/Cys-86.

Belongs to the cerato-ulmin hydrophobin family. As to quaternary structure, homodimer. Homodimers further self-assemble to form highly ordered films at water-air interfaces through intermolecular interactions.

It localises to the secreted. Its subcellular location is the cell wall. In terms of biological role, aerial growth, conidiation, and dispersal of filamentous fungi in the environment rely upon a capability of their secreting small amphipathic proteins called hydrophobins (HPBs) with low sequence identity. Class I can self-assemble into an outermost layer of rodlet bundles on aerial cell surfaces, conferring cellular hydrophobicity that supports fungal growth, development and dispersal; whereas Class II form highly ordered films at water-air interfaces through intermolecular interactions but contribute nothing to the rodlet structure. This is Class II hydrophobin 2 from Trichoderma asperellum (strain ATCC 204424 / CBS 433.97 / NBRC 101777).